The chain runs to 238 residues: Probable xyloglucan-specific endo-beta-1,4-glucanase A (238 aa).

A signal peptide spans 1–18 (MKFSLSVALSLAAATAQA). N-linked (GlcNAc...) asparagine glycosylation is found at Asn106 and Asn171.

It belongs to the glycosyl hydrolase 12 (cellulase H) family.

The protein localises to the secreted. It catalyses the reaction xyloglucan + H2O = xyloglucan oligosaccharides.. In terms of biological role, catalyzes endohydrolysis of 1,4-beta-D-glucosidic linkages in xyloglucan with retention of the beta-configuration of the glycosyl residues. Specific for xyloglucan and does not hydrolyze other cell wall components. The sequence is that of Probable xyloglucan-specific endo-beta-1,4-glucanase A (xgeA) from Neosartorya fischeri (strain ATCC 1020 / DSM 3700 / CBS 544.65 / FGSC A1164 / JCM 1740 / NRRL 181 / WB 181) (Aspergillus fischerianus).